We begin with the raw amino-acid sequence, 419 residues long: MLAAAFADSNSSSMNVSFAHLHFAGGYLPSDSQDWRTIIPALLVAVCLVGFVGNLCVIGILLHNAWKGKPSMIHSLILNLSLADLSLLLFSAPIRATAYSKSVWDLGWFVCKSSDWFIHTCMAAKSLTIVVVAKVCFMYASDPAKQVSIHNYTIWSVLVAIWTVASLLPLPEWFFSTIRHHEGVEMCLVDVPAVAEEFMSMFGKLYPLLAFGLPLFFASFYFWRAYDQCKKRGTKTQNLRNQIRSKQVTVMLLSIAIISALLWLPEWVAWLWVWHLKAAGPAPPQGFIALSQVLMFSISSANPLIFLVMSEEFREGLKGVWKWMITKKPPTVSESQETPAGNSEGLPDKVPSPESPASIPEKEKPSSPSSGKGKTEKAEIPILPDVEQFWHERDTVPSVQDNDPIPWEHEDQETGEGVK.

Over Met-1–Ala-41 the chain is Extracellular. 2 N-linked (GlcNAc...) asparagine glycosylation sites follow: Asn-10 and Asn-15. Residues Leu-42–Leu-62 traverse the membrane as a helical segment. The Cytoplasmic portion of the chain corresponds to His-63–Ser-71. The chain crosses the membrane as a helical span at residues Met-72–Ala-92. The Extracellular portion of the chain corresponds to Pro-93 to Trp-116. A disulfide bridge connects residues Cys-111 and Cys-187. Residues Phe-117 to Phe-137 traverse the membrane as a helical segment. At Met-138–Thr-153 the chain is on the cytoplasmic side. The helical transmembrane segment at Ile-154–Phe-174 threads the bilayer. Topologically, residues Phe-175–Met-201 are extracellular. The helical transmembrane segment at Phe-202–Phe-222 threads the bilayer. The Cytoplasmic portion of the chain corresponds to Trp-223–Leu-252. The helical transmembrane segment at Leu-253–Val-273 threads the bilayer. At Trp-274–Gly-286 the chain is on the extracellular side. Residues Phe-287–Leu-307 traverse the membrane as a helical segment. Topologically, residues Val-308–Lys-419 are cytoplasmic. Residues Pro-330–Lys-419 form a disordered region. Over residues Val-332–Gly-341 the composition is skewed to polar residues. Positions Glu-410–Lys-419 are enriched in acidic residues.

Belongs to the G-protein coupled receptor 1 family. High expression in the spinal cord.

It localises to the cell membrane. Its function is as follows. Proton-sensing G-protein coupled receptor. The polypeptide is G-protein coupled receptor 151 (GPR151) (Homo sapiens (Human)).